A 168-amino-acid polypeptide reads, in one-letter code: 2-C-methyl-D-erythritol 2,4-cyclodiphosphate synthase (168 aa).

A divalent metal cation-binding residues include Asp-11 and His-13. Residues Asp-11–His-13 and His-38–Ser-39 each bind 4-CDP-2-C-methyl-D-erythritol 2-phosphate. His-46 contributes to the a divalent metal cation binding site. Residues Asp-60–Gly-62, Thr-133–Asp-136, Phe-140, and Arg-143 each bind 4-CDP-2-C-methyl-D-erythritol 2-phosphate.

It belongs to the IspF family. As to quaternary structure, homotrimer. It depends on a divalent metal cation as a cofactor.

The catalysed reaction is 4-CDP-2-C-methyl-D-erythritol 2-phosphate = 2-C-methyl-D-erythritol 2,4-cyclic diphosphate + CMP. Its pathway is isoprenoid biosynthesis; isopentenyl diphosphate biosynthesis via DXP pathway; isopentenyl diphosphate from 1-deoxy-D-xylulose 5-phosphate: step 4/6. Its function is as follows. Involved in the biosynthesis of isopentenyl diphosphate (IPP) and dimethylallyl diphosphate (DMAPP), two major building blocks of isoprenoid compounds. Catalyzes the conversion of 4-diphosphocytidyl-2-C-methyl-D-erythritol 2-phosphate (CDP-ME2P) to 2-C-methyl-D-erythritol 2,4-cyclodiphosphate (ME-CPP) with a corresponding release of cytidine 5-monophosphate (CMP). The protein is 2-C-methyl-D-erythritol 2,4-cyclodiphosphate synthase of Cutibacterium acnes (strain DSM 16379 / KPA171202) (Propionibacterium acnes).